A 527-amino-acid chain; its full sequence is Peptide chain release factor 3 (527 aa).

In terms of domain architecture, tr-type G spans 9–277; the sequence is AKRRTFAIIS…AVVDWAPRPL (269 aa). GTP-binding positions include 18–25, 86–90, and 140–143; these read SHPDAGKT, DTPGH, and NKLD.

Belongs to the TRAFAC class translation factor GTPase superfamily. Classic translation factor GTPase family. PrfC subfamily.

The protein localises to the cytoplasm. Increases the formation of ribosomal termination complexes and stimulates activities of RF-1 and RF-2. It binds guanine nucleotides and has strong preference for UGA stop codons. It may interact directly with the ribosome. The stimulation of RF-1 and RF-2 is significantly reduced by GTP and GDP, but not by GMP. The sequence is that of Peptide chain release factor 3 from Ectopseudomonas mendocina (strain ymp) (Pseudomonas mendocina).